The primary structure comprises 134 residues: Prefoldin subunit 4 (134 aa).

The residue at position 2 (A2) is an N-acetylalanine. S125 carries the phosphoserine modification.

Belongs to the prefoldin subunit beta family. In terms of assembly, heterohexamer of two PFD-alpha type and four PFD-beta type subunits. Interacts with URI1; the interaction is phosphorylation-dependent and occurs in a growth-dependent manner.

It localises to the nucleus. Its subcellular location is the cytoplasm. The protein localises to the mitochondrion. Its function is as follows. Binds specifically to cytosolic chaperonin (c-CPN) and transfers target proteins to it. Binds to nascent polypeptide chain and promotes folding in an environment in which there are many competing pathways for nonnative proteins. This chain is Prefoldin subunit 4 (PFDN4), found in Homo sapiens (Human).